A 297-amino-acid polypeptide reads, in one-letter code: Probable endonuclease 4 (297 aa).

Zn(2+) is bound by residues histidine 69, histidine 110, glutamate 145, aspartate 179, histidine 182, histidine 214, aspartate 227, histidine 229, and glutamate 259.

Belongs to the AP endonuclease 2 family. Zn(2+) serves as cofactor.

The enzyme catalyses Endonucleolytic cleavage to 5'-phosphooligonucleotide end-products.. In terms of biological role, endonuclease IV plays a role in DNA repair. It cleaves phosphodiester bonds at apurinic or apyrimidinic (AP) sites, generating a 3'-hydroxyl group and a 5'-terminal sugar phosphate. This Listeria monocytogenes serovar 1/2a (strain ATCC BAA-679 / EGD-e) protein is Probable endonuclease 4.